A 104-amino-acid chain; its full sequence is Large ribosomal subunit protein eL36 (104 aa).

This sequence belongs to the eukaryotic ribosomal protein eL36 family.

In Tetrahymena thermophila (strain SB210), this protein is Large ribosomal subunit protein eL36 (RPL36).